The chain runs to 494 residues: V-type proton ATPase subunit B (494 aa).

R384 contacts ATP.

The protein belongs to the ATPase alpha/beta chains family. As to quaternary structure, V-ATPase is a heteromultimeric enzyme made up of two complexes: the ATP-hydrolytic V1 complex and the proton translocation V0 complex. The V1 complex consists of three catalytic AB heterodimers that form a heterohexamer, three peripheral stalks each consisting of EG heterodimers, one central rotor including subunits D and F, and the regulatory subunits C and H. The proton translocation complex V0 consists of the proton transport subunit a, a ring of proteolipid subunits c9c'', rotary subunit d, subunits e and f, and the accessory subunits VhaAC45 and ATP6AP2.

Functionally, non-catalytic subunit of the V1 complex of vacuolar(H+)-ATPase (V-ATPase), a multisubunit enzyme composed of a peripheral complex (V1) that hydrolyzes ATP and a membrane integral complex (V0) that translocates protons. V-ATPase is responsible for acidifying and maintaining the pH of intracellular compartments and in some cell types, is targeted to the plasma membrane, where it is responsible for acidifying the extracellular environment. Essential for the proper assembly and activity of V-ATPase. The sequence is that of V-type proton ATPase subunit B (VHA55) from Manduca sexta (Tobacco hawkmoth).